The following is a 321-amino-acid chain: uncharacterized protein (321 aa).

It belongs to the NAD(P)-dependent epimerase/dehydratase family.

This is an uncharacterized protein from Staphylococcus aureus (strain COL).